The sequence spans 323 residues: MADDFAYLNARVRVRRGTLLKESFFQEALDLSFADFLRLLSETVYGGELAGQGLPDVDRAVLRTQAKLVGDLPRLVTGEAREAVRLLLLRNDLHNLQALLRAKATGRPFEEVLLLPGTLREEVWRQAYEAQDPAGMAQVLAVPGHPLARALRAVLRETQDLARVEALLAKRFFEDVAKAAKGLDQPALRDYLALEVDAENLRTAFKLQGSGLAPDAFFLKGGRFVDRVRFARLMEGDYAVLDELSGTPFSGLSGVRDLRALERGLRCVLLKEAKKGVQDPLGVGLVLAYVKEREWEAVRLRLLARRAYFGLPRAQVEEEVVCP.

It belongs to the V-ATPase V0D/AC39 subunit family.

In terms of biological role, produces ATP from ADP in the presence of a proton gradient across the membrane. The protein is V-type ATP synthase subunit C of Thermus thermophilus (strain ATCC BAA-163 / DSM 7039 / HB27).